Consider the following 396-residue polypeptide: Beta-1,4-galactosyltransferase 3 (396 aa).

Residues M1 to C10 lie on the Cytoplasmic side of the membrane. The chain crosses the membrane as a helical; Signal-anchor for type II membrane protein span at residues T11–F31. Topologically, residues R32–H396 are lumenal. A glycan (N-linked (GlcNAc...) asparagine) is linked at N57. C80 and C122 are oxidised to a cystine. P133–R137 is a UDP-alpha-D-galactose binding site. Residue N169 is glycosylated (N-linked (GlcNAc...) asparagine). Residues F172–R174, V199–D200, Y229, and W261 contribute to the UDP-alpha-D-galactose site. C193 and C212 form a disulfide bridge. Residue D200 participates in Mn(2+) binding. G263–D266 lines the N-acetyl-D-glucosamine pocket. H294 provides a ligand contact to Mn(2+). Position 294–296 (H294–G296) interacts with UDP-alpha-D-galactose. R306 contacts N-acetyl-D-glucosamine. A glycan (N-linked (GlcNAc...) asparagine) is linked at N340. A disordered region spans residues I341–H396. Residues R353–F368 show a composition bias toward polar residues. N-linked (GlcNAc...) asparagine glycosylation occurs at N388.

It belongs to the glycosyltransferase 7 family. Mn(2+) is required as a cofactor.

It localises to the golgi apparatus. It is found in the golgi stack membrane. It catalyses the reaction an N-acetyl-beta-D-glucosaminyl derivative + UDP-alpha-D-galactose = a beta-D-galactosyl-(1-&gt;4)-N-acetyl-beta-D-glucosaminyl derivative + UDP + H(+). The enzyme catalyses N-acetyl-D-glucosamine + UDP-alpha-D-galactose = beta-D-galactosyl-(1-&gt;4)-N-acetyl-D-glucosamine + UDP + H(+). It carries out the reaction a beta-D-GlcNAc-(1-&gt;3)-beta-D-Gal-(1-&gt;4)-beta-D-Glc-(1&lt;-&gt;1)-Cer(d18:1(4E)) + UDP-alpha-D-galactose = a neolactoside nLc4Cer(d18:1(4E)) + UDP + H(+). The catalysed reaction is a beta-D-glucosylceramide + UDP-alpha-D-galactose = a beta-D-galactosyl-(1-&gt;4)-beta-D-glucosyl-(1&lt;-&gt;1)-ceramide + UDP + H(+). It catalyses the reaction a neolactoside IV(3)-beta-GlcNAc-nLc4Cer + UDP-alpha-D-galactose = a neolactoside nLc6Cer + UDP + H(+). It functions in the pathway protein modification; protein glycosylation. In terms of biological role, responsible for the synthesis of complex-type N-linked oligosaccharides in many glycoproteins as well as the carbohydrate moieties of glycolipids. This Bos taurus (Bovine) protein is Beta-1,4-galactosyltransferase 3 (B4GALT3).